Reading from the N-terminus, the 779-residue chain is Ribosome-releasing factor 2, mitochondrial (779 aa).

Positions Ala-68–Glu-353 constitute a tr-type G domain. Residues Ala-77–Thr-84, Asp-141–His-145, and Asn-195–Asp-198 each bind GTP.

This sequence belongs to the TRAFAC class translation factor GTPase superfamily. Classic translation factor GTPase family. EF-G/EF-2 subfamily.

The protein resides in the mitochondrion. The enzyme catalyses GTP + H2O = GDP + phosphate + H(+). Its function is as follows. Mitochondrial GTPase that mediates the disassembly of ribosomes from messenger RNA at the termination of mitochondrial protein biosynthesis. Acts in collaboration with MRRF. GTP hydrolysis follows the ribosome disassembly and probably occurs on the ribosome large subunit. Not involved in the GTP-dependent ribosomal translocation step during translation elongation. The chain is Ribosome-releasing factor 2, mitochondrial (Gfm2) from Rattus norvegicus (Rat).